The chain runs to 338 residues: Ketol-acid reductoisomerase (NADP(+)) (338 aa).

The KARI N-terminal Rossmann domain maps to 1-181 (MQVYYDKDCD…GGGRTGIIET (181 aa)). NADP(+) is bound by residues 24 to 27 (YGSQ), arginine 47, serine 50, serine 52, and 82 to 85 (DEFQ). Histidine 107 is a catalytic residue. An NADP(+)-binding site is contributed by glycine 133. Positions 182–327 (TFKDETETDL…EKLRAMMPWI (146 aa)) constitute a KARI C-terminal knotted domain. Mg(2+) is bound by residues aspartate 190, glutamate 194, glutamate 226, and glutamate 230. Serine 251 serves as a coordination point for substrate.

It belongs to the ketol-acid reductoisomerase family. Requires Mg(2+) as cofactor.

The catalysed reaction is (2R)-2,3-dihydroxy-3-methylbutanoate + NADP(+) = (2S)-2-acetolactate + NADPH + H(+). The enzyme catalyses (2R,3R)-2,3-dihydroxy-3-methylpentanoate + NADP(+) = (S)-2-ethyl-2-hydroxy-3-oxobutanoate + NADPH + H(+). It participates in amino-acid biosynthesis; L-isoleucine biosynthesis; L-isoleucine from 2-oxobutanoate: step 2/4. Its pathway is amino-acid biosynthesis; L-valine biosynthesis; L-valine from pyruvate: step 2/4. In terms of biological role, involved in the biosynthesis of branched-chain amino acids (BCAA). Catalyzes an alkyl-migration followed by a ketol-acid reduction of (S)-2-acetolactate (S2AL) to yield (R)-2,3-dihydroxy-isovalerate. In the isomerase reaction, S2AL is rearranged via a Mg-dependent methyl migration to produce 3-hydroxy-3-methyl-2-ketobutyrate (HMKB). In the reductase reaction, this 2-ketoacid undergoes a metal-dependent reduction by NADPH to yield (R)-2,3-dihydroxy-isovalerate. The chain is Ketol-acid reductoisomerase (NADP(+)) from Teredinibacter turnerae (strain ATCC 39867 / T7901).